The primary structure comprises 123 residues: Large ribosomal subunit protein bL19 (123 aa).

This sequence belongs to the bacterial ribosomal protein bL19 family.

In terms of biological role, this protein is located at the 30S-50S ribosomal subunit interface and may play a role in the structure and function of the aminoacyl-tRNA binding site. This chain is Large ribosomal subunit protein bL19, found in Ruegeria sp. (strain TM1040) (Silicibacter sp.).